We begin with the raw amino-acid sequence, 307 residues long: Protease HtpX homolog (307 aa).

2 helical membrane-spanning segments follow: residues 10-30 (VITI…AYGL) and 40-60 (ISII…QWLV). Residue His-144 coordinates Zn(2+). Residue Glu-145 is part of the active site. His-148 lines the Zn(2+) pocket. 2 helical membrane passes run 156–176 (LLLA…SMIF) and 187–207 (FFLV…MILG). Glu-213 contacts Zn(2+).

This sequence belongs to the peptidase M48B family. It depends on Zn(2+) as a cofactor.

Its subcellular location is the cell membrane. This is Protease HtpX homolog from Picrophilus torridus (strain ATCC 700027 / DSM 9790 / JCM 10055 / NBRC 100828 / KAW 2/3).